The following is a 396-amino-acid chain: Acetate kinase (396 aa).

N7 serves as a coordination point for Mg(2+). Residue K14 participates in ATP binding. R91 serves as a coordination point for substrate. The Proton donor/acceptor role is filled by D148. ATP is bound by residues 208–212 (HLGNG), 283–285 (DFR), and 331–335 (GLGEN). A Mg(2+)-binding site is contributed by E384.

This sequence belongs to the acetokinase family. As to quaternary structure, homodimer. Requires Mg(2+) as cofactor. Mn(2+) serves as cofactor.

It is found in the cytoplasm. The enzyme catalyses acetate + ATP = acetyl phosphate + ADP. It functions in the pathway metabolic intermediate biosynthesis; acetyl-CoA biosynthesis; acetyl-CoA from acetate: step 1/2. Its function is as follows. Catalyzes the formation of acetyl phosphate from acetate and ATP. Can also catalyze the reverse reaction. In Alkaliphilus metalliredigens (strain QYMF), this protein is Acetate kinase.